We begin with the raw amino-acid sequence, 367 residues long: Flagellar P-ring protein (367 aa).

A signal peptide spans 1-22; sequence MRRMLVIRWILAIHLIATQVFA.

This sequence belongs to the FlgI family. The basal body constitutes a major portion of the flagellar organelle and consists of four rings (L,P,S, and M) mounted on a central rod.

The protein resides in the periplasm. It localises to the bacterial flagellum basal body. In terms of biological role, assembles around the rod to form the L-ring and probably protects the motor/basal body from shearing forces during rotation. This is Flagellar P-ring protein from Legionella pneumophila (strain Lens).